Consider the following 411-residue polypeptide: UPF0761 membrane protein PSPA7_4558 (411 aa).

6 helical membrane passes run 36–56, 92–112, 132–152, 174–194, 207–229, and 244–264; these read LFAV…IPAF, HLTW…LVTI, FLLY…GFAV, LLGL…YSAV, GGMF…VSLF, and IFLL…VLVC.

The protein belongs to the UPF0761 family.

It is found in the cell inner membrane. The protein is UPF0761 membrane protein PSPA7_4558 of Pseudomonas paraeruginosa (strain DSM 24068 / PA7) (Pseudomonas aeruginosa (strain PA7)).